Here is a 1295-residue protein sequence, read N- to C-terminus: DNA (cytosine-5)-methyltransferase CMT2 (1295 aa).

3 disordered regions span residues 1–23 (MLSPAKCESEEAQAPLDLHSSSR), 61–91 (RRSTTLNCNSPEENGGEGRVSQRKSSRGKSQ), and 249–287 (NSSKQSLGSNKRMRRSQRFMKGTENEGEENLGKSKGKGM). Residues 61 to 72 (RRSTTLNCNSPE) show a composition bias toward polar residues. One can recognise a BAH domain in the interval 578–693 (HTFSLGDFAY…VEYSTFQTLR (116 aa)). The 542-residue stretch at 727–1268 (LPVLDLYSGC…YSLGMAFRGL (542 aa)) folds into the SAM-dependent MTase C5-type domain. The segment at 814 to 835 (SVNSTKETSGSSSSSDDDSDSE) is disordered. In terms of domain architecture, Chromo spans 837 to 902 (YEVEKLVDIC…SGFKSKILPL (66 aa)). C915 is a catalytic residue.

It belongs to the class I-like SAM-binding methyltransferase superfamily. C5-methyltransferase family.

The protein resides in the nucleus. It carries out the reaction a 2'-deoxycytidine in DNA + S-adenosyl-L-methionine = a 5-methyl-2'-deoxycytidine in DNA + S-adenosyl-L-homocysteine + H(+). Its function is as follows. May be involved in the CpXpG methylation and in gene silencing. The protein is DNA (cytosine-5)-methyltransferase CMT2 (CMT2) of Arabidopsis thaliana (Mouse-ear cress).